The sequence spans 528 residues: GMP synthase [glutamine-hydrolyzing] (528 aa).

In terms of domain architecture, Glutamine amidotransferase type-1 spans serine 13–aspartate 204. Cysteine 90 serves as the catalytic Nucleophile. Catalysis depends on residues histidine 178 and glutamate 180. The 199-residue stretch at tryptophan 205–arginine 403 folds into the GMPS ATP-PPase domain. Serine 232–serine 238 is a binding site for ATP.

In terms of assembly, homodimer.

The catalysed reaction is XMP + L-glutamine + ATP + H2O = GMP + L-glutamate + AMP + diphosphate + 2 H(+). It functions in the pathway purine metabolism; GMP biosynthesis; GMP from XMP (L-Gln route): step 1/1. Catalyzes the synthesis of GMP from XMP. In Prochlorococcus marinus (strain SARG / CCMP1375 / SS120), this protein is GMP synthase [glutamine-hydrolyzing].